The sequence spans 512 residues: ATP synthase subunit alpha (512 aa).

169–176 (GDRKTGKT) is an ATP binding site.

It belongs to the ATPase alpha/beta chains family. As to quaternary structure, F-type ATPases have 2 components, CF(1) - the catalytic core - and CF(0) - the membrane proton channel. CF(1) has five subunits: alpha(3), beta(3), gamma(1), delta(1), epsilon(1). CF(0) has three main subunits: a(1), b(2) and c(9-12). The alpha and beta chains form an alternating ring which encloses part of the gamma chain. CF(1) is attached to CF(0) by a central stalk formed by the gamma and epsilon chains, while a peripheral stalk is formed by the delta and b chains.

It is found in the cell membrane. The catalysed reaction is ATP + H2O + 4 H(+)(in) = ADP + phosphate + 5 H(+)(out). Its function is as follows. Produces ATP from ADP in the presence of a proton gradient across the membrane. The alpha chain is a regulatory subunit. The sequence is that of ATP synthase subunit alpha from Limosilactobacillus fermentum (strain NBRC 3956 / LMG 18251) (Lactobacillus fermentum).